We begin with the raw amino-acid sequence, 255 residues long: Glutamate racemase (255 aa).

Substrate contacts are provided by residues 7–8 (DS) and 39–40 (YG). Cys-70 (proton donor/acceptor) is an active-site residue. 71 to 72 (NT) contacts substrate. The active-site Proton donor/acceptor is Cys-181. 182-183 (TH) lines the substrate pocket.

It belongs to the aspartate/glutamate racemases family.

It carries out the reaction L-glutamate = D-glutamate. It functions in the pathway cell wall biogenesis; peptidoglycan biosynthesis. Functionally, provides the (R)-glutamate required for cell wall biosynthesis. The chain is Glutamate racemase from Helicobacter pylori (strain G27).